The chain runs to 291 residues: N-acetylmannosamine kinase (291 aa).

ATP-binding positions include 5–12 (AIDIGGTK) and 132–139 (GVGGGVVS). Zn(2+) contacts are provided by His156, Cys166, Cys168, and Cys173.

This sequence belongs to the ROK (NagC/XylR) family. NanK subfamily. In terms of assembly, homodimer.

The enzyme catalyses an N-acyl-D-mannosamine + ATP = an N-acyl-D-mannosamine 6-phosphate + ADP + H(+). It functions in the pathway amino-sugar metabolism; N-acetylneuraminate degradation; D-fructose 6-phosphate from N-acetylneuraminate: step 2/5. Catalyzes the phosphorylation of N-acetylmannosamine (ManNAc) to ManNAc-6-P. In Escherichia coli (strain ATCC 8739 / DSM 1576 / NBRC 3972 / NCIMB 8545 / WDCM 00012 / Crooks), this protein is N-acetylmannosamine kinase.